The sequence spans 414 residues: 2,3-diketo-5-methylthiopentyl-1-phosphate enolase (414 aa).

Lysine 99 acts as the Proton acceptor in catalysis. Residues lysine 148, 174 to 177 (KDDE), histidine 265, glycine 338, and 360 to 361 (GG) each bind substrate. Residues lysine 174, aspartate 176, and glutamate 177 each contribute to the Mg(2+) site. Lysine 174 is modified (N6-carboxylysine).

Belongs to the RuBisCO large chain family. Type IV subfamily. Homodimer. It depends on Mg(2+) as a cofactor.

The enzyme catalyses 5-methylsulfanyl-2,3-dioxopentyl phosphate = 2-hydroxy-5-methylsulfanyl-3-oxopent-1-enyl phosphate. It participates in amino-acid biosynthesis; L-methionine biosynthesis via salvage pathway; L-methionine from S-methyl-5-thio-alpha-D-ribose 1-phosphate: step 3/6. Functionally, catalyzes the enolization of 2,3-diketo-5-methylthiopentyl-1-phosphate (DK-MTP-1-P) into 2-hydroxy-3-keto-5-methylthiopentenyl-1-phosphate (HK-MTPenyl-1-P). The polypeptide is 2,3-diketo-5-methylthiopentyl-1-phosphate enolase (Bacillus cereus (strain ZK / E33L)).